The sequence spans 361 residues: sn-glycerol-3-phosphate import ATP-binding protein UgpC (361 aa).

The ABC transporter domain occupies 4-235 (LSFRNLKKTY…PASTFVAGFI (232 aa)). 37-44 (GPSGCGKS) is an ATP binding site.

The protein belongs to the ABC transporter superfamily. sn-glycerol-3-phosphate importer (TC 3.A.1.1.3) family. The complex is composed of two ATP-binding proteins (UgpC), two transmembrane proteins (UgpA and UgpE) and a solute-binding protein (UgpB).

Its subcellular location is the cell inner membrane. The catalysed reaction is sn-glycerol 3-phosphate(out) + ATP + H2O = sn-glycerol 3-phosphate(in) + ADP + phosphate + H(+). In terms of biological role, part of the ABC transporter complex UgpBAEC involved in sn-glycerol-3-phosphate (G3P) import. Responsible for energy coupling to the transport system. The chain is sn-glycerol-3-phosphate import ATP-binding protein UgpC from Bordetella avium (strain 197N).